Consider the following 105-residue polypeptide: uncharacterized protein (105 aa).

The protein resides in the plastid. This is an uncharacterized protein from Euglena longa (Euglenophycean alga).